Reading from the N-terminus, the 441-residue chain is Membrane protein PB1A10.07c (441 aa).

The next 11 membrane-spanning stretches (helical) occupy residues 1-21 (MGAV…VVGI), 41-61 (VGAV…SWCM), 97-117 (LSFT…LCNT), 128-148 (GLWP…FFIP), 158-178 (IISV…LVDF), 206-226 (TVGM…FFCA), 235-255 (INTI…HPTI), 263-283 (GLAQ…SALA), 307-327 (VIGA…AASS), 364-384 (YNFI…ASLL), and 415-435 (IITS…PVFF).

Belongs to the TDE1 family.

The protein resides in the membrane. This is Membrane protein PB1A10.07c from Schizosaccharomyces pombe (strain 972 / ATCC 24843) (Fission yeast).